The sequence spans 348 residues: MYGNMNNGGHAPYGYNGYRPSGGRMWGMSHSLPSGMSRYAFSPEDTDFTSSYPGPSMNRRGGYNDFSGGGGGGGGTMGSMNNMVNAASTNSLNCGGGGGRDGHGGGSNGTNLIVNYLPQDMTDRELYALFRTIGPINTCRIMRDYKTGYSFGYAFVDFAAETDSQRAIKSLNGITVRNKRLKVSYARPGGESIKDTNLYVTNLPRTITDDQLDTIFGKYGMIVQKNILRDKLTGKPRGVAFVRFNKREEAQEAISALNNVIPEGASQPLTVRLAEEHGKAKAQHYMSQLGLIGGGGGGGGGGGGGGGGMGGPPPPPMNMGYNNMVHRGRQNKSRFQKMHPYHNAQKFI.

2 consecutive RRM domains span residues 110-188 (TNLI…YARP) and 196-276 (TNLY…LAEE). The segment covering 296-310 (GGGGGGGGGGGGGMG) has biased composition (gly residues). The disordered stretch occupies residues 296-317 (GGGGGGGGGGGGGMGGPPPPPM).

It localises to the nucleus. Unknown; apparently not involved in somatic sex determination. This Ceratitis capitata (Mediterranean fruit fly) protein is Sex-lethal homolog (SXL).